A 129-amino-acid polypeptide reads, in one-letter code: Small ribosomal subunit protein uS11 (129 aa).

Belongs to the universal ribosomal protein uS11 family. As to quaternary structure, part of the 30S ribosomal subunit. Interacts with proteins S7 and S18. Binds to IF-3.

Its function is as follows. Located on the platform of the 30S subunit, it bridges several disparate RNA helices of the 16S rRNA. Forms part of the Shine-Dalgarno cleft in the 70S ribosome. This chain is Small ribosomal subunit protein uS11, found in Colwellia psychrerythraea (strain 34H / ATCC BAA-681) (Vibrio psychroerythus).